The chain runs to 410 residues: Dipeptidase 1 (410 aa).

Positions 1–16 (MVIIWWFWSLLAICAS) are cleaved as a signal peptide. Residues H36 and D38 each contribute to the Zn(2+) site. The cysteines at positions 87 and 170 are disulfide-linked. N121 carries N-linked (GlcNAc...) asparagine glycosylation. Zn(2+) is bound at residue E141. H168 contributes to the substrate binding site. Zn(2+) contacts are provided by H214 and H235. A disulfide bridge links C242 with C274. Residue R246 coordinates substrate. N258 is a glycosylation site (N-linked (GlcNAc...) asparagine). Position 304 (D304) interacts with substrate. Residue N332 is glycosylated (N-linked (GlcNAc...) asparagine). S384 carries GPI-anchor amidated serine lipidation. Residues 385–410 (QAHSIHLQTGALVASLASLLFRLHLL) constitute a propeptide, removed in mature form.

It belongs to the metallo-dependent hydrolases superfamily. Peptidase M19 family. Homodimer; disulfide-linked. The cofactor is Zn(2+). In terms of tissue distribution, expressed in heart, lung, skeletal muscle, kidney, liver, and testis. Not detected in brain and spleen.

Its subcellular location is the apical cell membrane. The protein resides in the cell projection. It localises to the microvillus membrane. The catalysed reaction is an L-aminoacyl-L-amino acid + H2O = 2 an L-alpha-amino acid. It catalyses the reaction leukotriene D4 + H2O = leukotriene E4 + glycine. The enzyme catalyses L-cystine-bis-glycine + 2 H2O = L-cystine + 2 glycine. It carries out the reaction a beta-lactam + H2O = a substituted beta-amino acid. The catalysed reaction is glycyldehydrophenylalanine + H2O = 2,3-didehydrophenylalanine + glycine. Inhibited by L-penicillamine. Inhibited by cilastatin. In terms of biological role, hydrolyzes a wide range of dipeptides including the conversion of leukotriene D4 to leukotriene E4. Hydrolyzes cystinyl-bis-glycine (cys-bis-gly) formed during glutathione degradation. Also possesses beta lactamase activity and hydrolytically inactivates beta-lactam antibiotics. Functionally, independently of its dipeptidase activity, acts as an adhesion receptor for neutrophil recruitment from bloodstream into inflamed lungs and liver. This chain is Dipeptidase 1 (Dpep1), found in Mus musculus (Mouse).